The following is a 131-amino-acid chain: Fumarate reductase subunit C (131 aa).

The next 3 helical transmembrane spans lie at 30–50 (EGTA…LFAL), 61–81 (IGFL…AAAL), and 110–130 (IKGL…VALF).

This sequence belongs to the FrdC family. Part of an enzyme complex containing four subunits: a flavoprotein (FrdA), an iron-sulfur protein (FrdB), and two hydrophobic anchor proteins (FrdC and FrdD).

It localises to the cell inner membrane. Two distinct, membrane-bound, FAD-containing enzymes are responsible for the catalysis of fumarate and succinate interconversion; fumarate reductase is used in anaerobic growth, and succinate dehydrogenase is used in aerobic growth. Anchors the catalytic components of the fumarate reductase complex to the cell inner membrane, binds quinones. This is Fumarate reductase subunit C from Klebsiella pneumoniae subsp. pneumoniae (strain ATCC 700721 / MGH 78578).